Consider the following 319-residue polypeptide: Acetyl-coenzyme A carboxylase carboxyl transferase subunit alpha (319 aa).

The region spanning 32 to 293 (NVETEVRALR…KAVLLNELDA (262 aa)) is the CoA carboxyltransferase C-terminal domain.

This sequence belongs to the AccA family. As to quaternary structure, acetyl-CoA carboxylase is a heterohexamer composed of biotin carboxyl carrier protein (AccB), biotin carboxylase (AccC) and two subunits each of ACCase subunit alpha (AccA) and ACCase subunit beta (AccD).

The protein resides in the cytoplasm. The enzyme catalyses N(6)-carboxybiotinyl-L-lysyl-[protein] + acetyl-CoA = N(6)-biotinyl-L-lysyl-[protein] + malonyl-CoA. It participates in lipid metabolism; malonyl-CoA biosynthesis; malonyl-CoA from acetyl-CoA: step 1/1. Component of the acetyl coenzyme A carboxylase (ACC) complex. First, biotin carboxylase catalyzes the carboxylation of biotin on its carrier protein (BCCP) and then the CO(2) group is transferred by the carboxyltransferase to acetyl-CoA to form malonyl-CoA. The sequence is that of Acetyl-coenzyme A carboxylase carboxyl transferase subunit alpha from Xanthomonas axonopodis pv. citri (strain 306).